The sequence spans 143 residues: CRISPR-associated endoribonuclease Cas2 (143 aa).

Asp14 contributes to the Mg(2+) binding site.

It belongs to the CRISPR-associated endoribonuclease Cas2 protein family. Homodimer, forms a heterotetramer with a Cas1 homodimer. Mg(2+) is required as a cofactor.

Functionally, CRISPR (clustered regularly interspaced short palindromic repeat), is an adaptive immune system that provides protection against mobile genetic elements (viruses, transposable elements and conjugative plasmids). CRISPR clusters contain sequences complementary to antecedent mobile elements and target invading nucleic acids. CRISPR clusters are transcribed and processed into CRISPR RNA (crRNA). Functions as a ssRNA-specific endoribonuclease. Involved in the integration of spacer DNA into the CRISPR cassette. The sequence is that of CRISPR-associated endoribonuclease Cas2 from Campylobacter jejuni subsp. jejuni serotype O:2 (strain ATCC 700819 / NCTC 11168).